A 149-amino-acid chain; its full sequence is 3-dehydroquinate dehydratase (149 aa).

Tyr23 acts as the Proton acceptor in catalysis. 3 residues coordinate substrate: Asn75, His81, and Asp88. The active-site Proton donor is His101. Residues Leu102 to Ser103 and Arg112 contribute to the substrate site.

It belongs to the type-II 3-dehydroquinase family. As to quaternary structure, homododecamer.

It catalyses the reaction 3-dehydroquinate = 3-dehydroshikimate + H2O. It participates in metabolic intermediate biosynthesis; chorismate biosynthesis; chorismate from D-erythrose 4-phosphate and phosphoenolpyruvate: step 3/7. Its function is as follows. Catalyzes a trans-dehydration via an enolate intermediate. In Stenotrophomonas maltophilia (strain R551-3), this protein is 3-dehydroquinate dehydratase.